Reading from the N-terminus, the 495-residue chain is UDP-glycosyltransferase 73C25 (495 aa).

A UDP-alpha-D-glucose-binding site is contributed by 23–26 (GHMI). H24 serves as the catalytic Proton acceptor. Residue D129 is the Charge relay of the active site. UDP-alpha-D-glucose contacts are provided by residues 355–358 (WSPQ), 373–381 (HCGWNSTLE), and 397–398 (DQ).

Belongs to the UDP-glycosyltransferase family.

Functionally, catalyzes the transfer of a glucose (Glc) moiety from UDP-Glc to the C-28 carboxylic group of oleanolate 3-O-beta-D-glucoside to form oleanolate 3,28-O-beta-D-diglucoside. This is UDP-glycosyltransferase 73C25 from Barbarea vulgaris (Yellow rocket).